Reading from the N-terminus, the 90-residue chain is Probable Fe(2+)-trafficking protein (90 aa).

Belongs to the Fe(2+)-trafficking protein family.

Could be a mediator in iron transactions between iron acquisition and iron-requiring processes, such as synthesis and/or repair of Fe-S clusters in biosynthetic enzymes. The polypeptide is Probable Fe(2+)-trafficking protein (Saccharophagus degradans (strain 2-40 / ATCC 43961 / DSM 17024)).